A 55-amino-acid polypeptide reads, in one-letter code: Ferredoxin (55 aa).

2 consecutive 4Fe-4S ferredoxin-type domains span residues 2–27 (FVIN…TQGD) and 28–55 (TQFV…PNQE). Positions 8, 11, 14, 18, 37, 40, 43, and 47 each coordinate [4Fe-4S] cluster.

[4Fe-4S] cluster is required as a cofactor.

Functionally, ferredoxins are iron-sulfur proteins that transfer electrons in a wide variety of metabolic reactions. In Clostridium butyricum, this protein is Ferredoxin.